We begin with the raw amino-acid sequence, 467 residues long: ATP synthase subunit beta (467 aa).

Residue 156–163 participates in ATP binding; sequence GGAGVGKT.

This sequence belongs to the ATPase alpha/beta chains family. In terms of assembly, F-type ATPases have 2 components, CF(1) - the catalytic core - and CF(0) - the membrane proton channel. CF(1) has five subunits: alpha(3), beta(3), gamma(1), delta(1), epsilon(1). CF(0) has three main subunits: a(1), b(2) and c(9-12). The alpha and beta chains form an alternating ring which encloses part of the gamma chain. CF(1) is attached to CF(0) by a central stalk formed by the gamma and epsilon chains, while a peripheral stalk is formed by the delta and b chains.

The protein resides in the cell inner membrane. The catalysed reaction is ATP + H2O + 4 H(+)(in) = ADP + phosphate + 5 H(+)(out). Functionally, produces ATP from ADP in the presence of a proton gradient across the membrane. The catalytic sites are hosted primarily by the beta subunits. The sequence is that of ATP synthase subunit beta from Cupriavidus pinatubonensis (strain JMP 134 / LMG 1197) (Cupriavidus necator (strain JMP 134)).